The chain runs to 268 residues: Short chain dehydrogenase/reductase dpchG (268 aa).

NADP(+) contacts are provided by valine 18, aspartate 70, asparagine 97, lysine 131, tyrosine 165, and lysine 169. The active-site Proton acceptor is tyrosine 165. Lysine 169 serves as the catalytic Lowers pKa of active site Tyr.

It belongs to the short-chain dehydrogenases/reductases (SDR) family.

It participates in secondary metabolite biosynthesis; terpenoid biosynthesis. In terms of biological role, short chain dehydrogenase/reductase; part of the gene cluster that mediates the biosynthesis of the diterpenoid pyrones higginsianins A and B. The first step of the pathway is the synthesis of the alpha-pyrone moiety by the polyketide synthase dpchA via condensation of one acetyl-CoA starter unit with 3 malonyl-CoA units and 2 methylations. The alpha-pyrone is then combined with geranylgeranyl pyrophosphate (GGPP) formed by the GGPP synthase dpchD through the action of the prenyltransferase dpchC to yield a linear alpha-pyrone diterpenoid. Subsequent steps in the diterpenoid pyrone biosynthetic pathway involve the decalin core formation, which is initiated by the epoxidation of the C10-C11 olefin by the FAD-dependent oxidoreductase dpchE, and is followed by a cyclization cascade catalyzed by the terpene cyclase dpchB. The short chain dehydrogenase/reductase dpchG then oxidizes the 8S hydroxy group to a ketone and the short chain dehydrogenase/reductase dpchH reduces the ketone to the 8R hydroxy group to yield higginsianin B. Finally, the FAD-dependent oxidoreductase dpchF converts higginsianin B into higginsianin A. This chain is Short chain dehydrogenase/reductase dpchG, found in Colletotrichum higginsianum (strain IMI 349063) (Crucifer anthracnose fungus).